The following is a 500-amino-acid chain: Nucleolar and spindle-associated protein 1 (500 aa).

Disordered regions lie at residues 48 to 204 (KNET…NFKK), 241 to 299 (TKKS…ASKS), 319 to 353 (VRFS…PESE), and 365 to 500 (ELLP…VPVK). A compositionally biased stretch (basic residues) spans 82-92 (THRRGRGRKPI). A compositionally biased stretch (polar residues) spans 113–127 (NMASSIDRTQQQNCT). The segment covering 264–274 (SRLSLLSPLPR) has biased composition (low complexity). A compositionally biased stretch (polar residues) spans 276-298 (TGASPSRTPMSQRRSCRSSTASK). Over residues 323 to 332 (EATKDNEHKR) the composition is skewed to basic and acidic residues. Residues 380 to 392 (ITLNTTTQPSPAT) are compositionally biased toward polar residues. Residues 442–451 (PWGESKENKP) show a composition bias toward basic and acidic residues. A compositionally biased stretch (polar residues) spans 452-469 (DPNSNVSVLKNNYKQPHL).

This sequence belongs to the NUSAP family. As to quaternary structure, interacts with DNA, microtubules, ipo7, kpna2 and kpnb1. Microtubule stabilization is inhibited by ipo7 and kpna2, while microtubule bundling is inhibited by kpnb1. Active GTP-bound ran causes dissociation of ipo7 and kpnb1.

It is found in the cytoplasm. It localises to the nucleus. The protein resides in the cytoskeleton. Its subcellular location is the spindle. Its function is as follows. Microtubule-associated protein with the capacity to bundle and stabilize microtubules. May associate with chromosomes and promote the organization of meiotic or mitotic spindle microtubules around them. The polypeptide is Nucleolar and spindle-associated protein 1 (nusap1) (Xenopus tropicalis (Western clawed frog)).